The primary structure comprises 42 residues: Tachystatin-B2 (42 aa).

Cystine bridges form between cysteine 4–cysteine 20, cysteine 11–cysteine 25, and cysteine 19–cysteine 37.

In terms of tissue distribution, granular hemocytes, small secretory granules.

The protein localises to the secreted. Its function is as follows. Exhibits stronger antimicrobial activity against the Gram-positive bacteria (S.aureus (IC(50) is 7.4 ug/ml)) and fungi (C.albicans (IC(50) is 3.0 ug/ml) and P.pastoris (IC(50) is 0.1 ug/ml)) than Gram-negative bacteria (E.coli no inhibition at 100 ug/ml). Binds to chitin (4.3 uM are required to obtain 50% of binding). Does not cause hemolysis on sheep erythrocytes. Has no blocking activity on the P-type calcium channel. This chain is Tachystatin-B2, found in Tachypleus tridentatus (Japanese horseshoe crab).